The chain runs to 265 residues: Large ribosomal subunit protein eL8 (265 aa).

The protein belongs to the eukaryotic ribosomal protein eL8 family. In terms of assembly, interacts with cmd-1 in the presence of Ca(2+).

This chain is Large ribosomal subunit protein eL8, found in Caenorhabditis elegans.